Consider the following 779-residue polypeptide: Pleckstrin homology domain-containing family A member 4 (779 aa).

One can recognise a PH domain in the interval 54–153 (PVHIRGWLHK…WLRALGKASR (100 aa)). 3 disordered regions span residues 152–355 (SRAE…LPGP), 495–669 (AGLG…SGGH), and 694–766 (SPER…QEEG). Ser164 is subject to Phosphoserine. A compositionally biased stretch (basic and acidic residues) spans 183-193 (VNRREEGRTSE). Low complexity-rich tracts occupy residues 246–259 (PRPR…PPLS) and 324–334 (QSTQVSSGSST). Basic and acidic residues predominate over residues 517-527 (QREESSERESL). The span at 528–540 (SESLELSSPQSPE) shows a compositional bias: low complexity. Residue Ser562 is modified to Phosphoserine. Residues 567 to 580 (RASSPECRQQSSPL) show a composition bias toward polar residues. Low complexity-rich tracts occupy residues 608 to 627 (GLSL…RTLS) and 649 to 659 (SSGSWSSPRHS). A compositionally biased stretch (polar residues) spans 720-740 (VTSSPTSHKANSATTGFSCQG).

It localises to the cytoplasm. It is found in the membrane. Binds specifically to phosphatidylinositol 3-phosphate (PtdIns3P), but not to other phosphoinositides. The protein is Pleckstrin homology domain-containing family A member 4 (Plekha4) of Rattus norvegicus (Rat).